The primary structure comprises 329 residues: uncharacterized protein (329 aa).

The disordered stretch occupies residues 284–303 (SGGGHSEAGGLNAPYDKSKS).

This is an uncharacterized protein from Methanocaldococcus jannaschii (strain ATCC 43067 / DSM 2661 / JAL-1 / JCM 10045 / NBRC 100440) (Methanococcus jannaschii).